The primary structure comprises 542 residues: 1,3-beta-glucanosyltransferase gas1 (542 aa).

The signal sequence occupies residues 1 to 19 (MKFSILSLAVAGLVGLAKA). N-linked (GlcNAc...) asparagine glycosylation occurs at asparagine 35. A disulfide bond links cysteine 70 and cysteine 99. Tyrosine 88 is a binding site for (1,3-beta-D-glucosyl)n. A glycan (N-linked (GlcNAc...) asparagine) is linked at asparagine 91. (1,3-beta-D-glucosyl)n is bound by residues asparagine 156 and glutamate 157. The active-site Proton donor is the glutamate 157. Asparagine 161 carries N-linked (GlcNAc...) asparagine glycosylation. The (1,3-beta-D-glucosyl)n site is built by aspartate 198 and arginine 203. Disulfide bonds link cysteine 212–cysteine 345, cysteine 230–cysteine 261, cysteine 367–cysteine 419, cysteine 376–cysteine 439, and cysteine 395–cysteine 400. Asparagine 249 carries N-linked (GlcNAc...) asparagine glycosylation. Catalysis depends on glutamate 258, which acts as the Nucleophile. Residue asparagine 279 is glycosylated (N-linked (GlcNAc...) asparagine). Tyrosine 290 provides a ligand contact to (1,3-beta-D-glucosyl)n. N-linked (GlcNAc...) asparagine glycosylation is found at asparagine 406, asparagine 484, asparagine 502, and asparagine 509. The segment at 490-515 (MSTSYTSGSGSSNSSGSSSNSSSKSS) is disordered. Serine 516 is lipidated: GPI-anchor amidated serine. Residues 517–542 (GASSYNLNMVITFLSVVIGGTAVLFI) constitute a propeptide, removed in mature form.

It belongs to the glycosyl hydrolase 72 family. Post-translationally, the GPI-anchor is attached to the protein in the endoplasmic reticulum and serves to target the protein to the cell surface. There, the glucosamine-inositol phospholipid moiety is cleaved off and the GPI-modified mannoprotein is covalently attached via its lipidless GPI glycan remnant to the 1,6-beta-glucan of the outer cell wall layer.

Its subcellular location is the secreted. The protein resides in the cell wall. It is found in the membrane. In terms of biological role, splits internally a 1,3-beta-glucan molecule and transfers the newly generated reducing end (the donor) to the non-reducing end of another 1,3-beta-glucan molecule (the acceptor) forming a 1,3-beta linkage, resulting in the elongation of 1,3-beta-glucan chains in the cell wall. This is 1,3-beta-glucanosyltransferase gas1 (gas1) from Schizosaccharomyces pombe (strain 972 / ATCC 24843) (Fission yeast).